Reading from the N-terminus, the 322-residue chain is Protein-L-isoaspartate O-methyltransferase (322 aa).

The segment at 1 to 101 (MSGERAKRFP…AKQGDRSAAP (101 aa)) is disordered. Residues 14–29 (EDLKREPRKPEGRVAE) are compositionally biased toward basic and acidic residues. Composition is skewed to low complexity over residues 33-51 (AGDA…PAAA) and 76-91 (HAPA…PQGG). S170 is an active-site residue.

The protein belongs to the methyltransferase superfamily. L-isoaspartyl/D-aspartyl protein methyltransferase family.

It is found in the cytoplasm. The catalysed reaction is [protein]-L-isoaspartate + S-adenosyl-L-methionine = [protein]-L-isoaspartate alpha-methyl ester + S-adenosyl-L-homocysteine. Its function is as follows. Catalyzes the methyl esterification of L-isoaspartyl residues in peptides and proteins that result from spontaneous decomposition of normal L-aspartyl and L-asparaginyl residues. It plays a role in the repair and/or degradation of damaged proteins. This chain is Protein-L-isoaspartate O-methyltransferase, found in Burkholderia pseudomallei (strain 1106a).